The sequence spans 399 residues: Tryptophan synthase beta chain (399 aa).

Lys90 bears the N6-(pyridoxal phosphate)lysine mark.

The protein belongs to the TrpB family. Tetramer of two alpha and two beta chains. Requires pyridoxal 5'-phosphate as cofactor.

The catalysed reaction is (1S,2R)-1-C-(indol-3-yl)glycerol 3-phosphate + L-serine = D-glyceraldehyde 3-phosphate + L-tryptophan + H2O. It participates in amino-acid biosynthesis; L-tryptophan biosynthesis; L-tryptophan from chorismate: step 5/5. Functionally, the beta subunit is responsible for the synthesis of L-tryptophan from indole and L-serine. This is Tryptophan synthase beta chain from Phocaeicola vulgatus (strain ATCC 8482 / DSM 1447 / JCM 5826 / CCUG 4940 / NBRC 14291 / NCTC 11154) (Bacteroides vulgatus).